A 234-amino-acid chain; its full sequence is Multicopy suppressor of SEC21 protein 27 (234 aa).

Residues 1 to 47 are Cytoplasmic-facing; the sequence is MQTPLESTDVKLDTLNEPSAHLIEKNVALPKDIFRSYLSYWIYEIAR. A Phosphothreonine modification is found at threonine 3. The chain crosses the membrane as a helical span at residues 48–68; that stretch reads YTPVMILSLVIGVLVLLIIFF. Residues 69–72 lie on the Extracellular side of the membrane; it reads NDNE. A helical transmembrane segment spans residues 73–93; the sequence is ACVFNSAYYAYLSLVVLLIIL. Residues 94–234 lie on the Cytoplasmic side of the membrane; the sequence is GDGNPKLVSR…NIDALLKKTE (141 aa). Residues 231–234 form a COPI binding region; the sequence is KKTE.

The protein belongs to the DUP/COS family. As to quaternary structure, interacts with MST28. Binds to coatomer proteins of COPI and SEC23/SEC24 of COPII coated vesicles.

The protein resides in the endoplasmic reticulum. It localises to the golgi apparatus. Its subcellular location is the cytoplasmic vesicle. The protein localises to the COPI-coated vesicle membrane. It is found in the COPII-coated vesicle membrane. Its function is as follows. Involved in protein trafficking vesicle formation, probably by stabilizing of coatomer at the Golgi membrane and thus allowing the efficient formation of COPI coated vesicles. This Saccharomyces cerevisiae (strain ATCC 204508 / S288c) (Baker's yeast) protein is Multicopy suppressor of SEC21 protein 27 (MST27).